A 242-amino-acid chain; its full sequence is Probable transcriptional regulatory protein Dred_1658 (242 aa).

Belongs to the TACO1 family.

It is found in the cytoplasm. The polypeptide is Probable transcriptional regulatory protein Dred_1658 (Desulforamulus reducens (strain ATCC BAA-1160 / DSM 100696 / MI-1) (Desulfotomaculum reducens)).